Consider the following 246-residue polypeptide: MTSSLSRPSGRRADELRKVALTRHYTKHAEGSVLVEFGDTKVICTASVVERVPEFLRERGQGWLTAEYGMLPRATHTRSDREAARGKQTGRTQEIQRLIGRALRAVFDLEALGPRTINIDCDVIQADGGTRTASITGAFVAAHDAVSKLIAAGKLARSPITDHVAAISVGVYEGAPVLDLDYAEDSRCDTDMNVVMTGAGGFVEVQGTAEGVPFSRAEMNALLDLAQAGIGRLVQLQKDVLGADHV.

Residues arginine 91 and 129–131 contribute to the phosphate site; that span reads GTR.

The protein belongs to the RNase PH family. In terms of assembly, homohexameric ring arranged as a trimer of dimers.

It carries out the reaction tRNA(n+1) + phosphate = tRNA(n) + a ribonucleoside 5'-diphosphate. In terms of biological role, phosphorolytic 3'-5' exoribonuclease that plays an important role in tRNA 3'-end maturation. Removes nucleotide residues following the 3'-CCA terminus of tRNAs; can also add nucleotides to the ends of RNA molecules by using nucleoside diphosphates as substrates, but this may not be physiologically important. Probably plays a role in initiation of 16S rRNA degradation (leading to ribosome degradation) during starvation. The sequence is that of Ribonuclease PH from Burkholderia vietnamiensis (strain G4 / LMG 22486) (Burkholderia cepacia (strain R1808)).